Consider the following 266-residue polypeptide: 3-oxoadipate enol-lactonase 1 (266 aa).

The AB hydrolase-1 domain occupies 28-250; sequence PAIVFSNSLG…DASHLSNIEQ (223 aa).

It catalyses the reaction (4,5-dihydro-5-oxofuran-2-yl)-acetate + H2O = 3-oxoadipate + H(+). The protein operates within aromatic compound metabolism; beta-ketoadipate pathway; 3-oxoadipate from 5-oxo-4,5-dihydro-2-furylacetate: step 1/1. This is 3-oxoadipate enol-lactonase 1 (pcaD) from Acinetobacter baylyi (strain ATCC 33305 / BD413 / ADP1).